A 132-amino-acid chain; its full sequence is Antileukoproteinase (132 aa).

The first 24 residues, M1–G24, serve as a signal peptide directing secretion. Residues E28–V76 form the WAP 1 domain. Cystine bridges form between C35–C64, C43–C68, C51–C63, and C57–C72. N77 carries an N-linked (GlcNAc...) asparagine glycan. In terms of domain architecture, WAP 2 spans V82 to V130. 4 disulfide bridges follow: C89–C118, C96–C122, C105–C117, and C111–C126.

Interacts with GRN; interaction protects progranulin from proteolysis. In terms of tissue distribution, detected in bronchoalveolar fluid (at protein level). Detected in large and small intestine, trachea, skin, lung and tongue.

Its subcellular location is the secreted. Functionally, acid-stable proteinase inhibitor with strong affinities for trypsin, chymotrypsin, elastase, and cathepsin G. Modulates the inflammatory and immune responses after bacterial infection, and after infection by the intracellular parasite L.major. Down-regulates responses to bacterial lipopolysaccharide (LPS). Plays a role in regulating the activation of NF-kappa-B and inflammatory responses. Has antimicrobial activity against mycobacteria, but not against salmonella. Contributes to normal resistance against infection by M.tuberculosis. Required for normal resistance to infection by L.major. Required for normal wound healing, probably by preventing tissue damage by limiting protease activity. Together with ELANE, required for normal differentiation and proliferation of bone marrow myeloid cells. The protein is Antileukoproteinase (SLPI) of Ovis aries (Sheep).